Reading from the N-terminus, the 305-residue chain is Acetylglutamate kinase (305 aa).

Substrate-binding positions include 67–68, Arg-89, and Asn-190; that span reads GG.

The protein belongs to the acetylglutamate kinase family. ArgB subfamily.

The protein localises to the cytoplasm. The catalysed reaction is N-acetyl-L-glutamate + ATP = N-acetyl-L-glutamyl 5-phosphate + ADP. It participates in amino-acid biosynthesis; L-arginine biosynthesis; N(2)-acetyl-L-ornithine from L-glutamate: step 2/4. Its function is as follows. Catalyzes the ATP-dependent phosphorylation of N-acetyl-L-glutamate. The polypeptide is Acetylglutamate kinase (Bifidobacterium longum subsp. infantis (strain ATCC 15697 / DSM 20088 / JCM 1222 / NCTC 11817 / S12)).